The chain runs to 210 residues: UMP-CMP kinase 3 (210 aa).

Residue Gly-34–Thr-39 coordinates ATP. Positions Ser-54–Val-83 are NMP. Residues Arg-60, Lys-81–Val-83, and Gly-108–Arg-111 each bind a ribonucleoside 5'-phosphate. Asn-115 provides a ligand contact to CMP. The interval Gly-146–Asp-154 is LID. Arg-147 provides a ligand contact to ATP. Residues Arg-151 and Arg-162 each contribute to the a ribonucleoside 5'-phosphate site. Lys-190 provides a ligand contact to ATP.

This sequence belongs to the adenylate kinase family. UMP-CMP kinase subfamily. In terms of assembly, monomer. It depends on Mg(2+) as a cofactor.

The protein resides in the cytoplasm. The protein localises to the nucleus. The enzyme catalyses UMP + ATP = UDP + ADP. It carries out the reaction CMP + ATP = CDP + ADP. The catalysed reaction is dCMP + ATP = dCDP + ADP. Functionally, catalyzes the phosphorylation of pyrimidine nucleoside monophosphates at the expense of ATP. Plays an important role in de novo pyrimidine nucleotide biosynthesis. Has preference for UMP and CMP as phosphate acceptors. The chain is UMP-CMP kinase 3 (URA6) from Oryza sativa subsp. japonica (Rice).